A 1207-amino-acid polypeptide reads, in one-letter code: Histidine kinase 1 (1207 aa).

Residues 1–10 (MRGDSFSMSI) show a composition bias toward polar residues. A disordered region spans residues 1 to 20 (MRGDSFSMSIENLPDSPMGS). Over 1–81 (MRGDSFSMSI…SSYYSVFVVR (81 aa)) the chain is Cytoplasmic. Residues 82 to 102 (LAIMVMLAILIGLLTVLTWHF) form a helical membrane-spanning segment. Topologically, residues 103–446 (TRIYTKQSLQ…GKVDERAFKT (344 aa)) are extracellular. The chain crosses the membrane as a helical span at residues 447–467 (LIILISASVCIFFIGCVCILI). At 468 to 1207 (LTNGVSKEMK…PSAFQTSLSA (740 aa)) the chain is on the cytoplasmic side. One can recognise a Histidine kinase domain in the interval 505–763 (NMSHELRTPM…LMRLYLILST (259 aa)). A Phosphohistidine; by autocatalysis modification is found at histidine 508. 2 disordered regions span residues 964–987 (DTCS…VKPS) and 1000–1021 (DATT…PEEE). A compositionally biased stretch (basic and acidic residues) spans 975-984 (SGEKQVDKSV). Low complexity predominate over residues 1000-1014 (DATTSNDDSTSASMT). The Response regulatory domain occupies 1045–1196 (RILLAEDTPV…LMVSTILSLT (152 aa)). The residue at position 1127 (aspartate 1127) is a 4-aspartylphosphate.

In terms of assembly, interacts with AHP2, depending of the phosphorylation state of Asp-1075 in the receiver domain, but probably not with AHP1 and AHP3. Post-translationally, autophosphorylated predominantly on His residues. Activation probably requires a transfer of a phosphate group between a His in the transmitter domain and an Asp of the receiver domain. In terms of tissue distribution, mostly expressed in roots, and, to a lower extent, in stems, leaves and flowers.

It is found in the cell membrane. It carries out the reaction ATP + protein L-histidine = ADP + protein N-phospho-L-histidine.. Its function is as follows. Functions as an osmosensor histidine kinase that detects water stress and transmits the stress signal to a downstream MAPK cascade. This protein undergoes an ATP-dependent autophosphorylation at a conserved histidine residue in the kinase core, and a phosphoryl group is then transferred to a conserved aspartate residue in the receiver domain. Positive regulator of drought and salt stress responses, and abscisic acid (ABA) signaling. Confers drought tolerance, probably by regulating levels of ABA accumulation. Plays a redundant role in regulating plant growth and development. Required for the regulation of desiccation processes during seed formation. The sequence is that of Histidine kinase 1 (AHK1) from Arabidopsis thaliana (Mouse-ear cress).